The sequence spans 2083 residues: Nonribosomal peptide synthetase sidD (2083 aa).

An adenylation 1 region spans residues 251–650; it reads TYRQIDQYSS…GEIESQLRAR (400 aa). Residues 764–840 enclose the Carrier 1 domain; it reads RELSDLERRL…AMASVVRICD (77 aa). Serine 801 carries the O-(pantetheine 4'-phosphoryl)serine modification. The interval 876-1146 is condensation 1; that stretch reads EDIYPCTPTQ…IATVPIRVRI (271 aa). Positions 1336–1421 are adenylation 2; that stretch reads LSPIGCVGEL…TEIERHLAEH (86 aa). A Carrier 2 domain is found at 1557–1633; the sequence is NHLSASESIL…DAARVMKVDE (77 aa). Serine 1594 carries the O-(pantetheine 4'-phosphoryl)serine modification. A condensation 2 region spans residues 1674–1946; that stretch reads DVLPVTDSQD…YQLTPVRVPF (273 aa).

This sequence belongs to the NRP synthetase family.

The protein operates within siderophore biosynthesis. In terms of biological role, nonribosomal peptide synthetase; part of the siderophore biosynthetic pathway. Aspergillus fumigatus produces four types of siderophores, low-molecular-mass iron chelators, including excreted fusarinine C (FsC) and triacetylfusarinine C (TAFC) for iron uptake; and intacellular ferricrocin (FC) for hyphal and hydroxyferricrocin (HFC) for conidial iron distribution and storage. TAFC consists of three N(2)-acetyl-N(5)-anhydromevalonyl-N(5)-hydroxyornithine residues cyclically linked by ester bonds; FC is a cyclic hexapeptide with the structure Gly-Ser-Gly-(N(5)-acetyl-N(5)-hydroxyornithine)x3. The biosynthesis of all four siderophores depends on the hydroxylation of ornithine, catalyzed by the monooxygenase sidA. Subsequently, the pathways for biosynthesis of extra- and intracellular siderophores split. For biosynthesis of extracellular siderophores, the transacylase sidF transfers anhydromevalonyl to N(5)-hydroxyornithine. The required anhydromevalonyl-CoA moiety is derived from mevalonate by CoA ligation and dehydration catalyzed by sidI and sidH respectively. The acetylation of N(5)-hydroxyornithine for FC biosynthesis involves the constitutively expressed sidL. FC is hydroxylated to HFC by an as yet uncharacterized enzyme during conidiation. Assembly of fusarinine C (FsC) and FC is catalyzed by two different nonribosomal peptide synthetases (NRPS), sidD and sidC respectively. Subsequently, sidG catalyzes N2-acetylation of FsC for forming TAFC. Both extra- and intracellular siderophores are crucial for growth during iron limitation and virulence. The chain is Nonribosomal peptide synthetase sidD from Aspergillus fumigatus (strain ATCC MYA-4609 / CBS 101355 / FGSC A1100 / Af293) (Neosartorya fumigata).